The following is a 311-amino-acid chain: Pyrimidine-specific ribonucleoside hydrolase RihA (311 aa).

His-240 is a catalytic residue.

The protein belongs to the IUNH family. RihA subfamily.

Functionally, hydrolyzes with equal efficiency cytidine or uridine to ribose and cytosine or uracil, respectively. This is Pyrimidine-specific ribonucleoside hydrolase RihA from Escherichia coli O81 (strain ED1a).